The following is a 1372-amino-acid chain: DNA-directed RNA polymerase subunit beta (1372 aa).

It belongs to the RNA polymerase beta chain family. The RNAP catalytic core consists of 2 alpha, 1 beta, 1 beta' and 1 omega subunit. When a sigma factor is associated with the core the holoenzyme is formed, which can initiate transcription.

It carries out the reaction RNA(n) + a ribonucleoside 5'-triphosphate = RNA(n+1) + diphosphate. In terms of biological role, DNA-dependent RNA polymerase catalyzes the transcription of DNA into RNA using the four ribonucleoside triphosphates as substrates. This Nitratidesulfovibrio vulgaris (strain DP4) (Desulfovibrio vulgaris) protein is DNA-directed RNA polymerase subunit beta.